A 643-amino-acid chain; its full sequence is Phosphatidylinositol-3,5-bisphosphate 3-phosphatase MTMR2 (643 aa).

Composition is skewed to polar residues over residues 1–12 (MEKSSSCESLGS) and 23–40 (DSLSSASTSHSENSVHTK). The tract at residues 1–56 (MEKSSSCESLGSQPAAARPPSVDSLSSASTSHSENSVHTKSASVVSSDSISTSADN) is disordered. A phosphoserine mark is found at S6 and S9. Positions 41–55 (SASVVSSDSISTSAD) are enriched in low complexity. S58 bears the Phosphoserine mark. The GRAM domain maps to 68–139 (NKLAEMEEPP…GVINRVEKIG (72 aa)). In terms of domain architecture, Myotubularin phosphatase spans 205–580 (GWKLYDPLLE…RHLELWVGYY (376 aa)). Residues N330, N355, and I356 each contribute to the a 1,2-diacyl-sn-glycero-3-phospho-(1D-myo-inositol-3,5-bisphosphate) site. Residues N330, N355, and I356 each contribute to the a 1,2-diacyl-sn-glycero-3-phospho-(1D-myo-inositol-3-phosphate) site. C417 serves as the catalytic Phosphocysteine intermediate. A 1,2-diacyl-sn-glycero-3-phospho-(1D-myo-inositol-3,5-bisphosphate)-binding residues include S418, D419, G420, W421, D422, R423, R459, and R463. Residues S418, D419, G420, W421, D422, and R423 each coordinate a 1,2-diacyl-sn-glycero-3-phospho-(1D-myo-inositol-3-phosphate). Position 463 (R463) interacts with a 1,2-diacyl-sn-glycero-3-phospho-(1D-myo-inositol-3-phosphate). Residues 593–627 (IHNRYKELLAKRAELQKKVEELQREISNRSTSSSE) adopt a coiled-coil conformation. A disordered region spans residues 615-643 (QREISNRSTSSSERASSPAQCVTPVQTVV). A compositionally biased stretch (low complexity) spans 620–631 (NRSTSSSERASS). The span at 632-643 (PAQCVTPVQTVV) shows a compositional bias: polar residues.

Belongs to the protein-tyrosine phosphatase family. Non-receptor class myotubularin subfamily. Homodimer (via coiled-coil domain). Heterotetramer consisting of one MTMR2 dimer and one SBF2/MTMR13 dimer; specifically in peripheral nerves stabilizes SBF2/MTMR13 at the membranes and increases MTMR2 catalytic activity towards phosphatidylinositol 3,5-bisphosphate and to a lesser extent towards phosphatidylinositol 3-phosphate. Heterodimer with SBF1/MTMR5; acts as an adapter for the phosphatase MTMR2 to regulate MTMR2 catalytic activity and subcellular location. Heterodimer with MTMR12. In terms of processing, phosphorylation at Ser-58 decreases MTMR2 localization to endocytic vesicular structures.

The protein localises to the cytoplasm. The protein resides in the early endosome membrane. It localises to the perinuclear region. Its subcellular location is the cell projection. It is found in the axon. The protein localises to the endosome membrane. The enzyme catalyses a 1,2-diacyl-sn-glycero-3-phospho-(1D-myo-inositol-3,5-bisphosphate) + H2O = a 1,2-diacyl-sn-glycero-3-phospho-(1D-myo-inositol-5-phosphate) + phosphate. It catalyses the reaction a 1,2-diacyl-sn-glycero-3-phospho-(1D-myo-inositol-3-phosphate) + H2O = a 1,2-diacyl-sn-glycero-3-phospho-(1D-myo-inositol) + phosphate. It carries out the reaction 1,2-dioctanoyl-sn-glycero-3-phospho-(1-D-myo-inositol-3-phosphate) + H2O = 1,2-dioctanoyl-sn-glycero-3-phospho-(1D-myo-inositol) + phosphate. The catalysed reaction is 1,2-dioctanoyl-sn-glycero-3-phospho-(1D-myo-inositol-3,5-bisphosphate) + H2O = 1,2-dioctanoyl-sn-glycero-3-phospho-(1D-myo-inositol-5-phosphate) + phosphate. Lipid phosphatase that specifically dephosphorylates the D-3 position of phosphatidylinositol 3-phosphate and phosphatidylinositol 3,5-bisphosphate, generating phosphatidylinositol and phosphatidylinositol 5-phosphate. Regulates the level of these phosphoinositides critical for various biological processes including autophagy initiation and autophagosome maturation. The chain is Phosphatidylinositol-3,5-bisphosphate 3-phosphatase MTMR2 from Pongo abelii (Sumatran orangutan).